An 844-amino-acid chain; its full sequence is Saxiphilin (844 aa).

Positions 1–19 (MAPTFQTALFFTIISLSFA) are cleaved as a signal peptide. A Transferrin-like 1; first part domain is found at 26-106 (VRWCAISDLE…IAEPYSSNRD (81 aa)). 19 disulfides stabilise this stretch: Cys29/Cys64, Cys39/Cys55, Cys110/Cys130, Cys141/Cys148, Cys150/Cys172, Cys180/Cys202, Cys222/Cys244, Cys277/Cys360, Cys322/Cys335, Cys332/Cys343, Cys388/Cys402, Cys495/Cys527, Cys505/Cys518, Cys552/Cys839, Cys570/Cys799, Cys607/Cys685, Cys641/Cys655, Cys652/Cys668, and Cys725/Cys739. Thyroglobulin type-1 domains lie at 107-172 (LQKC…RATC) and 177-244 (LPKC…PATC). Residues 109–249 (KCLKERQQAL…IPATCQKHDL (141 aa)) are absent in transferrins. The Transferrin-like 1; second part domain occupies 245-482 (QKHDLVTTCH…LFHAMKALTG (238 aa)). In terms of domain architecture, Transferrin-like 2 spans 492-828 (VRWCTINKLE…YYTTVYGASR (337 aa)).

It belongs to the transferrin family. As to quaternary structure, monomer. Plasma. Highest levels of transcripts found in the liver, the lung, the pancreas and the brain.

Its subcellular location is the secreted. In terms of biological role, binds specifically to the neurotoxin saxitoxin. Its physiological role may be to transport or sequester an endogenous organic molecule other than Fe(3+). It may participate in a detoxification mechanism for neutralizing a microbial toxin. In Aquarana catesbeiana (American bullfrog), this protein is Saxiphilin.